A 585-amino-acid polypeptide reads, in one-letter code: uncharacterized protein (585 aa).

The disordered stretch occupies residues 27–59 (DDSERSVKSVSVSISDDEDSKTDVQDNMATPST).

This is an uncharacterized protein from Saccharomyces cerevisiae (strain ATCC 204508 / S288c) (Baker's yeast).